Reading from the N-terminus, the 1240-residue chain is Selection and upkeep of intraepithelial T-cells protein 6 (1240 aa).

Residues 1-24 (MGTIGVPLTAHCVVLFLLQMVALS) form the signal peptide. Topologically, residues 25–1086 (TEQFTVNGLE…CNKRNPFWKK (1062 aa)) are extracellular. The Ig-like V-type domain maps to 26–141 (EQFTVNGLES…EEHIIEVKVT (116 aa)). Cysteine 49 and cysteine 123 are oxidised to a cystine. The Ig-like C1-type domain occupies 142-231 (ATSSDIQILM…FVTHQEESIS (90 aa)). N-linked (GlcNAc...) asparagine glycosylation is found at asparagine 155, asparagine 200, and asparagine 314. Cysteine 163 and cysteine 217 form a disulfide bridge. The helical transmembrane segment at 1087–1107 (HALDLGISVFAIIVVTLIRHL) threads the bilayer. The Cytoplasmic segment spans residues 1108–1125 (NQREADQHFELDTLWSKD). The chain crosses the membrane as a helical span at residues 1126–1146 (TSVILCVLIMFNNRLKALIYF). Residues 1147–1167 (RLYGYSPPGKTYKYIVNYILR) lie on the Extracellular side of the membrane. A helical transmembrane segment spans residues 1168-1188 (FSQPLFFIVYSAIILVMHLQI). Topologically, residues 1189–1205 (QNTDSLFSLYNSWMVEM) are cytoplasmic. Residues 1206 to 1226 (IMVLGLLLAIFNVKNIATALL) form a helical membrane-spanning segment. Topologically, residues 1227–1240 (HLGRTTLRLFRIKD) are extracellular.

This sequence belongs to the SKINT family. In terms of tissue distribution, expressed in skin.

It localises to the membrane. Its function is as follows. May act by engaging a cell surface molecule on immature T-cells in the embryonic thymus. In Mus musculus (Mouse), this protein is Selection and upkeep of intraepithelial T-cells protein 6 (Skint6).